The primary structure comprises 101 residues: UPF0473 protein MGAS10750_Spy1887 (101 aa).

Belongs to the UPF0473 family.

In Streptococcus pyogenes serotype M4 (strain MGAS10750), this protein is UPF0473 protein MGAS10750_Spy1887.